The following is a 398-amino-acid chain: Dual-specificity RNA methyltransferase RlmN (398 aa).

Residue E119 is the Proton acceptor of the active site. A Radical SAM core domain is found at 125–364 (EADRATLCVS…TIVRKTRGDD (240 aa)). Cysteines 132 and 369 form a disulfide. The [4Fe-4S] cluster site is built by C139, C143, and C146. S-adenosyl-L-methionine-binding positions include 193 to 194 (GE), S225, 247 to 249 (SLH), and N326. Catalysis depends on C369, which acts as the S-methylcysteine intermediate.

Belongs to the radical SAM superfamily. RlmN family. It depends on [4Fe-4S] cluster as a cofactor.

It localises to the cytoplasm. The catalysed reaction is adenosine(2503) in 23S rRNA + 2 reduced [2Fe-2S]-[ferredoxin] + 2 S-adenosyl-L-methionine = 2-methyladenosine(2503) in 23S rRNA + 5'-deoxyadenosine + L-methionine + 2 oxidized [2Fe-2S]-[ferredoxin] + S-adenosyl-L-homocysteine. It catalyses the reaction adenosine(37) in tRNA + 2 reduced [2Fe-2S]-[ferredoxin] + 2 S-adenosyl-L-methionine = 2-methyladenosine(37) in tRNA + 5'-deoxyadenosine + L-methionine + 2 oxidized [2Fe-2S]-[ferredoxin] + S-adenosyl-L-homocysteine. In terms of biological role, specifically methylates position 2 of adenine 2503 in 23S rRNA and position 2 of adenine 37 in tRNAs. m2A2503 modification seems to play a crucial role in the proofreading step occurring at the peptidyl transferase center and thus would serve to optimize ribosomal fidelity. This Yersinia pseudotuberculosis serotype IB (strain PB1/+) protein is Dual-specificity RNA methyltransferase RlmN.